Reading from the N-terminus, the 321-residue chain is Transaldolase (321 aa).

The active-site Schiff-base intermediate with substrate is the Lys-132.

Belongs to the transaldolase family. Type 1 subfamily. Homodimer.

It is found in the cytoplasm. It catalyses the reaction D-sedoheptulose 7-phosphate + D-glyceraldehyde 3-phosphate = D-erythrose 4-phosphate + beta-D-fructose 6-phosphate. It participates in carbohydrate degradation; pentose phosphate pathway; D-glyceraldehyde 3-phosphate and beta-D-fructose 6-phosphate from D-ribose 5-phosphate and D-xylulose 5-phosphate (non-oxidative stage): step 2/3. Functionally, transaldolase is important for the balance of metabolites in the pentose-phosphate pathway. This Rhizobium rhizogenes (strain K84 / ATCC BAA-868) (Agrobacterium radiobacter) protein is Transaldolase.